The sequence spans 133 residues: Nickel-responsive regulator (133 aa).

Positions 76, 87, 89, and 95 each coordinate Ni(2+).

This sequence belongs to the transcriptional regulatory CopG/NikR family. Homotetramer. It depends on Ni(2+) as a cofactor.

Transcriptional repressor of the nikABCDE operon. Is active in the presence of excessive concentrations of intracellular nickel. This Escherichia coli (strain SE11) protein is Nickel-responsive regulator.